The following is a 294-amino-acid chain: 4-hydroxy-tetrahydrodipicolinate synthase (294 aa).

Residue Thr44 coordinates pyruvate. The active-site Proton donor/acceptor is Tyr132. Lys161 serves as the catalytic Schiff-base intermediate with substrate. Residue Ile206 coordinates pyruvate.

The protein belongs to the DapA family. As to quaternary structure, homotetramer; dimer of dimers.

It localises to the cytoplasm. The enzyme catalyses L-aspartate 4-semialdehyde + pyruvate = (2S,4S)-4-hydroxy-2,3,4,5-tetrahydrodipicolinate + H2O + H(+). The protein operates within amino-acid biosynthesis; L-lysine biosynthesis via DAP pathway; (S)-tetrahydrodipicolinate from L-aspartate: step 3/4. With respect to regulation, is not inhibited by (S)-lysine, in contrast to E.coli DapA. In terms of biological role, catalyzes the condensation of (S)-aspartate-beta-semialdehyde [(S)-ASA] and pyruvate to 4-hydroxy-tetrahydrodipicolinate (HTPA). This is 4-hydroxy-tetrahydrodipicolinate synthase from Thermotoga maritima (strain ATCC 43589 / DSM 3109 / JCM 10099 / NBRC 100826 / MSB8).